The following is a 454-amino-acid chain: CCA-adding enzyme (454 aa).

Residues Ser59 and Arg62 each contribute to the ATP site. Residues Ser59 and Arg62 each contribute to the CTP site. Mg(2+) is bound by residues Asp71, Asp73, and Asp125. His148, Lys167, and Tyr176 together coordinate ATP. Residues His148, Lys167, and Tyr176 each contribute to the CTP site.

Belongs to the tRNA nucleotidyltransferase/poly(A) polymerase family. Archaeal CCA-adding enzyme subfamily. In terms of assembly, homodimer. It depends on Mg(2+) as a cofactor.

The catalysed reaction is a tRNA precursor + 2 CTP + ATP = a tRNA with a 3' CCA end + 3 diphosphate. It carries out the reaction a tRNA with a 3' CCA end + 2 CTP + ATP = a tRNA with a 3' CCACCA end + 3 diphosphate. In terms of biological role, catalyzes the addition and repair of the essential 3'-terminal CCA sequence in tRNAs without using a nucleic acid template. Adds these three nucleotides in the order of C, C, and A to the tRNA nucleotide-73, using CTP and ATP as substrates and producing inorganic pyrophosphate. tRNA 3'-terminal CCA addition is required both for tRNA processing and repair. Also involved in tRNA surveillance by mediating tandem CCA addition to generate a CCACCA at the 3' terminus of unstable tRNAs. While stable tRNAs receive only 3'-terminal CCA, unstable tRNAs are marked with CCACCA and rapidly degraded. The chain is CCA-adding enzyme from Methanosarcina barkeri (strain Fusaro / DSM 804).